The chain runs to 311 residues: DNA replication terminus site-binding protein (311 aa).

Belongs to the Tus family.

The protein resides in the cytoplasm. Its function is as follows. Trans-acting protein required for termination of DNA replication. Binds to DNA replication terminator sequences (terA to terF) to prevent the passage of replication forks. The termination efficiency will be affected by the affinity of this protein for the terminator sequence. This Yersinia pseudotuberculosis serotype O:1b (strain IP 31758) protein is DNA replication terminus site-binding protein.